Here is a 202-residue protein sequence, read N- to C-terminus: Probable pathogenesis-related protein CaO19.2336 (202 aa).

An N-terminal signal peptide occupies residues 1-20; it reads MKTLLFIYLQLLLLLSIIIG. N-linked (GlcNAc...) asparagine glycosylation is found at N58 and N152. Positions 66–179 constitute an SCP domain; sequence LKEHNNKRKL…LNALYIVCSY (114 aa).

The protein belongs to the CRISP family.

It localises to the secreted. Functionally, secreted protein that acts as a virulence factor during infections. This chain is Probable pathogenesis-related protein CaO19.2336, found in Candida albicans (strain SC5314 / ATCC MYA-2876) (Yeast).